A 345-amino-acid chain; its full sequence is Fructose-bisphosphate aldolase, plasmid (345 aa).

Position 50 (serine 50) interacts with D-glyceraldehyde 3-phosphate. Catalysis depends on aspartate 83, which acts as the Proton donor. Zn(2+) contacts are provided by histidine 84, aspartate 105, glutamate 142, and histidine 198. Glycine 199 provides a ligand contact to dihydroxyacetone phosphate. Histidine 232 lines the Zn(2+) pocket. Residues 233 to 235 and 275 to 278 each bind dihydroxyacetone phosphate; these read GSS and NIDT.

This sequence belongs to the class II fructose-bisphosphate aldolase family. In terms of assembly, homodimer. It depends on Zn(2+) as a cofactor.

The enzyme catalyses beta-D-fructose 1,6-bisphosphate = D-glyceraldehyde 3-phosphate + dihydroxyacetone phosphate. It functions in the pathway carbohydrate biosynthesis; Calvin cycle. It participates in carbohydrate degradation; glycolysis; D-glyceraldehyde 3-phosphate and glycerone phosphate from D-glucose: step 4/4. Catalyzes the aldol condensation of dihydroxyacetone phosphate (DHAP or glycerone-phosphate) with glyceraldehyde 3-phosphate (G3P) to form fructose 1,6-bisphosphate (FBP) in gluconeogenesis and the reverse reaction in glycolysis. This Cupriavidus necator (strain ATCC 17699 / DSM 428 / KCTC 22496 / NCIMB 10442 / H16 / Stanier 337) (Ralstonia eutropha) protein is Fructose-bisphosphate aldolase, plasmid (cbbAP).